Here is a 118-residue protein sequence, read N- to C-terminus: Large ribosomal subunit protein uL18 (118 aa).

The protein belongs to the universal ribosomal protein uL18 family. In terms of assembly, part of the 50S ribosomal subunit; part of the 5S rRNA/L5/L18/L25 subcomplex. Contacts the 5S and 23S rRNAs.

This is one of the proteins that bind and probably mediate the attachment of the 5S RNA into the large ribosomal subunit, where it forms part of the central protuberance. The sequence is that of Large ribosomal subunit protein uL18 from Myxococcus xanthus (strain DK1622).